Consider the following 150-residue polypeptide: Large ribosomal subunit protein bL9 (150 aa).

This sequence belongs to the bacterial ribosomal protein bL9 family.

In terms of biological role, binds to the 23S rRNA. The sequence is that of Large ribosomal subunit protein bL9 from Streptococcus pyogenes serotype M18 (strain MGAS8232).